Reading from the N-terminus, the 304-residue chain is Coenzyme PQQ synthesis protein B (304 aa).

Belongs to the PqqB family.

The protein operates within cofactor biosynthesis; pyrroloquinoline quinone biosynthesis. Functionally, may be involved in the transport of PQQ or its precursor to the periplasm. The sequence is that of Coenzyme PQQ synthesis protein B from Stutzerimonas stutzeri (Pseudomonas stutzeri).